The sequence spans 401 residues: Tryptophan synthase beta chain (401 aa).

K88 carries the N6-(pyridoxal phosphate)lysine modification.

It belongs to the TrpB family. As to quaternary structure, tetramer of two alpha and two beta chains. Pyridoxal 5'-phosphate is required as a cofactor.

The catalysed reaction is (1S,2R)-1-C-(indol-3-yl)glycerol 3-phosphate + L-serine = D-glyceraldehyde 3-phosphate + L-tryptophan + H2O. It functions in the pathway amino-acid biosynthesis; L-tryptophan biosynthesis; L-tryptophan from chorismate: step 5/5. Functionally, the beta subunit is responsible for the synthesis of L-tryptophan from indole and L-serine. The sequence is that of Tryptophan synthase beta chain from Shewanella denitrificans (strain OS217 / ATCC BAA-1090 / DSM 15013).